The chain runs to 153 residues: uncharacterized protein (153 aa).

The next 3 membrane-spanning stretches (helical) occupy residues Ile-17–Phe-37, Phe-44–Gly-64, and Phe-118–Ile-138.

This sequence to M.jannaschii MJ0129 and MJ0554.

It is found in the cell membrane. This is an uncharacterized protein from Methanocaldococcus jannaschii (strain ATCC 43067 / DSM 2661 / JAL-1 / JCM 10045 / NBRC 100440) (Methanococcus jannaschii).